The following is a 70-amino-acid chain: Small ribosomal subunit protein bS21A (70 aa).

Belongs to the bacterial ribosomal protein bS21 family.

The chain is Small ribosomal subunit protein bS21A from Burkholderia orbicola (strain AU 1054).